A 530-amino-acid chain; its full sequence is Asc-type amino acid transporter 1 (530 aa).

The tract at residues 1 to 36 (MRRDSDMASHIQQPGGHGNPGPAPSPSPGPGPGPGA) is disordered. The span at 21 to 33 (GPAPSPSPGPGPG) shows a compositional bias: pro residues. Helical transmembrane passes span 46–66 (IGLV…GIFI), 78–98 (VGLA…GSLC), 119–139 (IFGG…MYPT), 192–212 (IQVI…TVGF), 274–294 (AIFI…VAYF), 316–336 (LLGY…FGGI), 368–388 (CTPI…MLVG), 394–414 (INYV…GLLV), 430–450 (LLVP…SFIS), and 454–474 (VCGV…LGVF). Positions 508–530 (EEENGPMGQPSPLPITDKPLKTQ) are disordered.

Belongs to the amino acid-polyamine-organocation (APC) superfamily. In terms of assembly, disulfide-linked heterodimer with the amino acid transport protein SLC3A2/4F2hc.

It is found in the cell membrane. The enzyme catalyses L-alanine(in) + glycine(out) = L-alanine(out) + glycine(in). It carries out the reaction L-serine(out) + L-alanine(in) = L-serine(in) + L-alanine(out). The catalysed reaction is L-threonine(out) + L-alanine(in) = L-threonine(in) + L-alanine(out). It catalyses the reaction L-cysteine(out) + L-alanine(in) = L-cysteine(in) + L-alanine(out). The enzyme catalyses 2-aminoisobutanoate(out) + L-alanine(in) = 2-aminoisobutanoate(in) + L-alanine(out). It carries out the reaction D-serine(out) + L-alanine(in) = D-serine(in) + L-alanine(out). The catalysed reaction is D-alanine(out) + L-alanine(in) = D-alanine(in) + L-alanine(out). It catalyses the reaction L-valine(out) + L-alanine(in) = L-valine(in) + L-alanine(out). The enzyme catalyses L-methionine(out) + L-alanine(in) = L-methionine(in) + L-alanine(out). It carries out the reaction beta-alanine(out) + L-alanine(in) = beta-alanine(in) + L-alanine(out). The catalysed reaction is D-cysteine(out) + L-alanine(in) = D-cysteine(in) + L-alanine(out). It catalyses the reaction D-threonine(out) + L-alanine(in) = D-threonine(in) + L-alanine(out). The enzyme catalyses D-isoleucine(out) + D-serine(in) = D-isoleucine(in) + D-serine(out). It carries out the reaction D-serine(in) = D-serine(out). Functionally, associates with SLC3A2/4F2hc to form a functional heterodimeric complex that translocates small neutral L- and D-amino acids across the plasma membrane. Preferentially mediates exchange transport, but can also operate via facilitated diffusion. Acts as a major transporter for glycine, L- and D-serine in the central nervous system. At the spinal cord and brainstem regulates glycine metabolism and glycinergic inhibitory neurotransmission by providing for glycine de novo synthesis from L-serine and glycine recycling from astrocytes to glycinergic motor neurons. At Schaffer collateral-CA1 synapses mediates D-serine and glycine release that modulates post-synaptic activation of NMDA receptors and excitatory glutamatergic transmission. May regulate D-serine release from mesenchymal progenitors located in developing subcutaneous adipose tissue, favoring white adipocyte over thermogenic beige adipocyte lineage commitment. This is Asc-type amino acid transporter 1 (Slc7a10) from Rattus norvegicus (Rat).